A 509-amino-acid chain; its full sequence is Heat shock 70 kDa protein 14 (509 aa).

This sequence belongs to the heat shock protein 70 family. Component of ribosome-associated complex (RAC), a heterodimer composed of Hsp70/DnaK-type chaperone HSPA14 and Hsp40/DnaJ-type chaperone DNAJC2.

It localises to the cytoplasm. The protein localises to the cytosol. In terms of biological role, component of the ribosome-associated complex (RAC), a complex involved in folding or maintaining nascent polypeptides in a folding-competent state. In the RAC complex, binds to the nascent polypeptide chain, while DNAJC2 stimulates its ATPase activity. The polypeptide is Heat shock 70 kDa protein 14 (HSPA14) (Homo sapiens (Human)).